The chain runs to 422 residues: MKISLLGHGKTTLALGRFFKKNHNEVKFFDDKFLSSFKDSEGFLCYPSKDFNPNDSQLEIVSPGISFTHPLVIKAKHLVSEYDYINSLFDLVFTPTIISISGTNGKTTTTEMLTMLLEDFKAVSGGNIGTPLIELFEKRSPLWVLETSSFSLHYTNKAYPLIYLLINIEADHLTWHCNFENYLNAKLKVLTLMPKTSLAILPLKFKEHPIIQNSQAQKIFFDKSEEVLERLKIPSNALFFKGAFLLDAALALLVYEQFLKIKNLKWQDYRENALKRLNAFKIGSHKMEEFRDKQGRLWVDDSKATNIDATLQALKTFKNQKIHLILGGDIKGVNLTPLFEEFKNYKISLYAIGSSAFIIQALALEFNVSCQVCLELEKAVQEIKSVLSQNEIALLSPSAASLDQFSSYKERGEKFKAFVLKD.

102–108 is an ATP binding site; the sequence is GTNGKTT.

It belongs to the MurCDEF family.

Its subcellular location is the cytoplasm. It catalyses the reaction UDP-N-acetyl-alpha-D-muramoyl-L-alanine + D-glutamate + ATP = UDP-N-acetyl-alpha-D-muramoyl-L-alanyl-D-glutamate + ADP + phosphate + H(+). It participates in cell wall biogenesis; peptidoglycan biosynthesis. Its function is as follows. Cell wall formation. Catalyzes the addition of glutamate to the nucleotide precursor UDP-N-acetylmuramoyl-L-alanine (UMA). In Helicobacter pylori (strain ATCC 700392 / 26695) (Campylobacter pylori), this protein is UDP-N-acetylmuramoylalanine--D-glutamate ligase.